We begin with the raw amino-acid sequence, 77 residues long: Chaplin-H (77 aa).

A signal peptide spans 1–25 (MLKKVVAAAAATGGLVLAGAGMAVA). The region spanning 36 to 76 (SPGVLSGNVVQVPVHVPVNVCGNTISVIGLLNPAFGNVCIN) is the Chaplin domain. Forms amyloid fibrils in vitro stretches follow at residues 38 to 54 (GVLS…VPVN) and 57 to 72 (GNTI…AFGN). An intrachain disulfide couples Cys-56 to Cys-74.

Belongs to the chaplin family. Short chaplin subfamily. In terms of assembly, homodimer; disulfide linked. About 10% of ChpH isolated from cell wall forms disulfide-bonded homodimers.

The protein resides in the cell surface. Its subcellular location is the secreted. It localises to the cell wall. It is found in the fimbrium. In terms of biological role, one of 8 partially redundant surface-active proteins required for efficient formation of aerial mycelium; the short chaplins assemble into a hydrophobic, amyloidal fibrillar surface layer that envelopes and protects aerial hyphae and spores, presumably anchored to the long chaplins. Chaplins have an overlapping function with the surface-active SapB peptide; chaplins are essential on minimal medium while on rich medium both chaplins and SapB are required for efficient aerial hyphae formation. Chaplins are also involved in cell attachment to a hydrophobic surface. Forms amyloid fibrils in vitro probably composed of stacked beta-sheets. A small chaplin extract (ChpD, ChpE, ChpF, ChpG and ChpH) self-assembles into 2 different amyloids; small fibrils at the air-water interface form an amphipathic membrane that resembles spore-surface structures involved in aerial hyphae formation, and hydrophilic fibrils in solution that resemble the fibers that attach cells to a hydrophobic surface. At the air-water interface the hydrophilic surface is in contact with water (probably equivalent to the peptidoglycan layer), while the hydrophobic face is exposed to the air, making the surface of the aerial hyphae hydrophobic. A minimal chaplin strain capable of forming aerial mycelium/hyphae on minimal medium contains ChpC, ChpE and ChpH. The strain also has restored rodlet formation on the hyphae surface. A small chaplin extract applied to a chaplin-deficient strain restores aerial hyphae formation. The small chaplin extract forms an amyloid-like structure similar to that seen on the surface of cells without rodlets (rdlA-rdlB deletions), and is highly surface active, reducing surface tension from 72 to 26 mJ/m(2), which probably allows escape of hyphae from an aqueous environment into air. This is Chaplin-H from Streptomyces coelicolor (strain ATCC BAA-471 / A3(2) / M145).